A 2370-amino-acid polypeptide reads, in one-letter code: Genome polyprotein (2370 aa).

A lipid anchor (N-myristoyl glycine; by host) is attached at Gly112. Disordered stretches follow at residues 140 to 173 (VGDM…GNVV) and 704 to 736 (GADG…FDYP). Over residues 154-171 (GSNKGGSSTSPKSTSNGN) the composition is skewed to low complexity. Residues 713-725 (APTSDLSDGNPTT) are compositionally biased toward polar residues. Residues 1358–1522 (YSTALSAISL…AAFSAAAALK (165 aa)) form the SF3 helicase domain. 1384–1391 (GPPGTGKS) is a binding site for ATP. Gly1597 carries the N-myristoyl glycine; by host lipid modification. The chain crosses the membrane as a helical span at residues 1646-1666 (IFAASSFLSLIAATLTIVRCL). The tract at residues 1674–1696 (GAYSGTPVPKPRKKDLPKQPVYS) is disordered. Tyr1676 is modified (O-(5'-phospho-RNA)-tyrosine). The region spanning 1697 to 1886 (GPVRRQGFDP…FSARLTPERV (190 aa)) is the Peptidase C3 domain. Residues His1745, Glu1776, and Cys1849 each act as for protease 3C activity in the active site. Over residues 2007 to 2016 (SPGYPWTTQG) the composition is skewed to polar residues. Residues 2007–2026 (SPGYPWTTQGRSRRSLFDED) are disordered. The 118-residue stretch at 2122 to 2239 (SNVWSIDYSC…GSNQDFHPRE (118 aa)) folds into the RdRp catalytic domain. Residues Asp2128 and Asp2225 each act as for RdRp activity in the active site.

Interacts with capsid protein VP1. Interacts with capsid protein VP3. As to quaternary structure, interacts with capsid protein VP0. Interacts with capsid protein VP3. In terms of assembly, interacts with capsid protein VP0. Interacts with capsid protein VP1. Homodimer. Interacts with protein 2B. Interacts with protein 2C. As to quaternary structure, homodimer. Interacts with host ABCD3. Interacts with protein 2A. Interacts with host ACBD3. In terms of assembly, homodimer. Interacts with host ABCD3. Interacts with protein 2A. Interacts with protein 3A. Interacts with protein 3C. Interacts with host ACBD3. Homodimer. Interacts with host ABCD3 (via GOLD domain) and PI4KB; these interactions allow the formation of a viral protein/ACBD3/PI4KB complex in order to synthesize PI4P at the viral RNA replication sites. Interacts with protein 2C. Interacts with protein 3C. Protein 3C: Interacts with protein 2A. Protein 3C: Interacts with protein 2C. Specific enzymatic cleavages by the viral protease in vivo yield a variety of precursors and mature proteins. The leader protein-VP0 junction is cleaved by 3C proteinase. The VP1/2A junction is cleaved by the protein 3CD in association with protein 2A. In terms of processing, uridylylated by the polymerase and is covalently linked to the 5'-end of genomic RNA. This uridylylated form acts as a nucleotide-peptide primer for the polymerase.

The protein resides in the virion. Its subcellular location is the host cytoplasm. The protein localises to the host cytoplasmic vesicle membrane. It is found in the host Golgi apparatus membrane. It catalyses the reaction RNA(n) + a ribonucleoside 5'-triphosphate = RNA(n+1) + diphosphate. The catalysed reaction is Selective cleavage of Gln-|-Gly bond in the poliovirus polyprotein. In other picornavirus reactions Glu may be substituted for Gln, and Ser or Thr for Gly.. The enzyme catalyses ATP + H2O = ADP + phosphate + H(+). Required for viral RNA replication and viral RNA encapsidation. Does not have any proteolytic activity. Functionally, forms an icosahedral capsid of pseudo T=3 symmetry with capsid proteins VP0 and VP3. Together they form an icosahedral capsid composed of 60 copies of each VP0, VP1, and VP3. All the three latter proteins contain a beta-sheet structure called beta-barrel jelly roll. Its function is as follows. Forms an icosahedral capsid of pseudo T=3 symmetry with capsid proteins VP1 and VP3. Together they form an icosahedral capsid composed of 60 copies of each VP0, VP1, and VP3. All the three latter proteins contain a beta-sheet structure called beta-barrel jelly roll. In terms of biological role, forms an icosahedral capsid of pseudo T=3 symmetry with capsid proteins VP0 and VP1. Together they form an icosahedral capsid composed of 60 copies of each VP0, VP1, and VP3. All the three latter proteins contain a beta-sheet structure called beta-barrel jelly roll. Required for viral RNA replication. Does not have any proteolytic activity. Functionally, affects membrane integrity and causes an increase in membrane permeability. Its function is as follows. Induces and associates with structural rearrangements of intracellular membranes. Displays RNA-binding, nucleotide binding and NTPase activities. May play a role in virion morphogenesis and viral RNA encapsidation by interacting with the capsid protein VP3. In terms of biological role, serves as membrane anchor via its hydrophobic domain. Plays an essential role in viral RNA replication by recruiting PI4KB at the viral replication sites, thereby allowing the formation of rearranged membranous structures where viral replication takes place. Forms a primer, VPg-pU, which is utilized by the polymerase for the initiation of RNA chains. Functionally, cysteine protease that generates mature viral proteins from the precursor polyprotein. In addition to its proteolytic activity, it binds to viral RNA, and thus influences viral genome replication. RNA and substrate cooperatively bind to the protease. Its function is as follows. Replicates the genomic and antigenomic RNAs by recognizing replications specific signals. Performs VPg uridylylation. The polypeptide is Genome polyprotein (Homo sapiens (Human)).